A 176-amino-acid chain; its full sequence is Glutamyl-tRNA(Gln) amidotransferase subunit F, mitochondrial (176 aa).

Belongs to the GatF family. As to quaternary structure, subunit of the heterotrimeric GatFAB amidotransferase (AdT) complex, composed of A, B and F subunits.

The protein resides in the mitochondrion inner membrane. The enzyme catalyses L-glutamyl-tRNA(Gln) + L-glutamine + ATP + H2O = L-glutaminyl-tRNA(Gln) + L-glutamate + ADP + phosphate + H(+). Allows the formation of correctly charged Gln-tRNA(Gln) through the transamidation of misacylated Glu-tRNA(Gln) in the mitochondria. The reaction takes place in the presence of glutamine and ATP through an activated gamma-phospho-Glu-tRNA(Gln). Required for proper protein synthesis within the mitochondrion. The polypeptide is Glutamyl-tRNA(Gln) amidotransferase subunit F, mitochondrial (Yarrowia lipolytica (strain CLIB 122 / E 150) (Yeast)).